The chain runs to 196 residues: Anthranilate synthase component 2 (196 aa).

The Glutamine amidotransferase type-1 domain occupies 3–196; the sequence is NIVFIDNFDS…IEWALEKNNA (194 aa). 57–59 contributes to the L-glutamine binding site; the sequence is GPG. Cys84 acts as the Nucleophile; for GATase activity in catalysis. L-glutamine-binding positions include Gln88 and 134-135; that span reads SL. Residues His170 and Glu172 each act as for GATase activity in the active site.

Heterotetramer consisting of two non-identical subunits: a beta subunit (TrpG) and a large alpha subunit (TrpE).

The enzyme catalyses chorismate + L-glutamine = anthranilate + pyruvate + L-glutamate + H(+). It functions in the pathway amino-acid biosynthesis; L-tryptophan biosynthesis; L-tryptophan from chorismate: step 1/5. Part of a heterotetrameric complex that catalyzes the two-step biosynthesis of anthranilate, an intermediate in the biosynthesis of L-tryptophan. In the first step, the glutamine-binding beta subunit (TrpG) of anthranilate synthase (AS) provides the glutamine amidotransferase activity which generates ammonia as a substrate that, along with chorismate, is used in the second step, catalyzed by the large alpha subunit of AS (TrpE) to produce anthranilate. In the absence of TrpG, TrpE can synthesize anthranilate directly from chorismate and high concentrations of ammonia. This chain is Anthranilate synthase component 2 (trpG), found in Vibrio parahaemolyticus serotype O3:K6 (strain RIMD 2210633).